Here is a 440-residue protein sequence, read N- to C-terminus: Chromosome partition protein MukF (440 aa).

The leucine-zipper stretch occupies residues 208-236 (LSETSGTLRELQDTLEAAGDKLQANLLRI).

Belongs to the MukF family. As to quaternary structure, interacts, and probably forms a ternary complex, with MukE and MukB via its C-terminal region. The complex formation is stimulated by calcium or magnesium. It is required for an interaction between MukE and MukB.

It localises to the cytoplasm. Its subcellular location is the nucleoid. Its function is as follows. Involved in chromosome condensation, segregation and cell cycle progression. May participate in facilitating chromosome segregation by condensation DNA from both sides of a centrally located replisome during cell division. Not required for mini-F plasmid partitioning. Probably acts via its interaction with MukB and MukE. Overexpression results in anucleate cells. It has a calcium binding activity. The chain is Chromosome partition protein MukF from Escherichia coli O157:H7.